The primary structure comprises 366 residues: Homeobox-leucine zipper protein HOX21 (366 aa).

2 disordered regions span residues 25–81 (QQAA…SSAQ) and 94–132 (MLGKRPMSYGDGGGGGDEVNGGGEDELSDDGSQAGEKKR). Residues 36-48 (HHHHHHHGHHGHH) show a composition bias toward basic residues. Positions 62 to 74 (GPPPPPPPHPHNP) are enriched in pro residues. Residues 103–115 (GDGGGGGDEVNGG) show a composition bias toward gly residues. The homeobox DNA-binding region spans 127–186 (AGEKKRRLNVEQVRTLEKNFELGNKLEPERKMQLARALGLQPRQVAIWFQNRRARWKTKQ). Residues 185 to 229 (KQLEKDYDALKRQLDAVKAENDALLNHNKKLQAEIVALKGREAAS) are leucine-zipper. Disordered regions lie at residues 239–287 (EASC…GGGG) and 312–336 (LHSSSGGAGGPKMEHHGGGGNVQAA). Polar residues predominate over residues 240–252 (ASCSNRSENSSEI).

It belongs to the HD-ZIP homeobox family. Class I subfamily. As to expression, expressed in seedlings, roots, stems, leaf blades and panicles.

The protein resides in the nucleus. Probable transcription factor. The sequence is that of Homeobox-leucine zipper protein HOX21 (HOX21) from Oryza sativa subsp. japonica (Rice).